The primary structure comprises 151 residues: uncharacterized protein (151 aa).

This is an uncharacterized protein from Bacillus subtilis (strain 168).